The chain runs to 267 residues: Putative hydro-lyase Arth_3576 (267 aa).

This sequence belongs to the D-glutamate cyclase family.

This chain is Putative hydro-lyase Arth_3576, found in Arthrobacter sp. (strain FB24).